A 333-amino-acid chain; its full sequence is Autoinducer 2 import system permease protein LsrD (333 aa).

The next 10 helical transmembrane spans lie at 7–27 (YGWE…FGLS), 45–65 (ICIG…GIDI), 67–87 (FGST…AGVP), 90–110 (VAIP…AGLI), 118–138 (LVIT…LSGL), 162–182 (LFGL…FWLL), 212–232 (TLCM…ILLV), 240–260 (SDLG…GGAN), 261–281 (IYGG…VGYL), and 288–308 (IGTP…LVVV).

The protein belongs to the binding-protein-dependent transport system permease family. AraH/RbsC subfamily. As to quaternary structure, the complex is composed of two ATP-binding proteins (LsrA), two transmembrane proteins (LsrC and LsrD) and a solute-binding protein (LsrB).

The protein resides in the cell inner membrane. Functionally, part of the ABC transporter complex LsrABCD involved in autoinducer 2 (AI-2) import. Probably responsible for the translocation of the substrate across the membrane. The polypeptide is Autoinducer 2 import system permease protein LsrD (lsrD) (Yersinia pseudotuberculosis serotype IB (strain PB1/+)).